Reading from the N-terminus, the 786-residue chain is Tyrosine-protein kinase Btk (786 aa).

The interval M1 to S23 is disordered. The segment covering S14 to S23 has biased composition (low complexity). One can recognise a PH domain in the interval D41–E184. The Btk-type zinc finger occupies N187 to W223. Zn(2+) contacts are provided by H195, C206, C207, and C217. A compositionally biased stretch (low complexity) spans A226 to S240. A disordered region spans residues A226–S301. The segment covering T241 to N260 has biased composition (polar residues). A compositionally biased stretch (gly residues) spans S264–S290. The segment covering C291–S301 has biased composition (polar residues). The region spanning H342–L402 is the SH3 domain. Residues W410–P503 enclose the SH2 domain. The Protein kinase domain occupies L526–L779. ATP-binding positions include L532–V540 and K554. The active-site Proton acceptor is the D647. Y677 carries the phosphotyrosine; by autocatalysis modification.

This sequence belongs to the protein kinase superfamily. Tyr protein kinase family. TEC subfamily. It depends on Zn(2+) as a cofactor. As to expression, ring canals in the egg chambers and imaginal disks of third-instar larvae.

It carries out the reaction L-tyrosyl-[protein] + ATP = O-phospho-L-tyrosyl-[protein] + ADP + H(+). Required for proper ring canal development. Also required for the development of male genitalia and for adult survival. The protein is Tyrosine-protein kinase Btk of Drosophila melanogaster (Fruit fly).